The sequence spans 276 residues: Cruxhalorhodopsin-3 (276 aa).

A propeptide spanning residues 1 to 21 is cleaved from the precursor; sequence MPAASTAATTLLQASQSEVLG. At 22 to 25 the chain is on the extracellular side; that stretch reads EIQS. A helical transmembrane segment spans residues 26-51; it reads NFLLNSSLWVNIALAGVVILLFVAMG. The Cytoplasmic segment spans residues 52 to 57; the sequence is RELESS. The helical transmembrane segment at 58–81 threads the bilayer; that stretch reads RAKLIWVATMLVPLVSISSYAGLA. At 82–105 the chain is on the extracellular side; the sequence is SGLTVGFLQMPPGHALAGQEVLSP. A helical transmembrane segment spans residues 106 to 127; the sequence is WGRYLTWTFSTPMILLALGLLA. At 128–130 the chain is on the cytoplasmic side; it reads DTD. The helical transmembrane segment at 131 to 154 threads the bilayer; the sequence is MASLFTAITMDIGMCITGLAAALV. At 155 to 157 the chain is on the extracellular side; it reads TSS. The chain crosses the membrane as a helical span at residues 158-180; it reads HLLRWVFYGISCAFFIAVLYVLL. Residues 181-192 are Cytoplasmic-facing; sequence VEWPADAEAAGT. A helical membrane pass occupies residues 193-216; the sequence is SEIFGTLKLLTVVLWLGYPILWAL. Over 217–225 the chain is Extracellular; it reads GSEGVALLS. A helical transmembrane segment spans residues 226–254; sequence VGVTSWGYSGLDILAKYVFAFLLLRWVAA. An N6-(retinylidene)lysine modification is found at K241. Residues 255-276 are Cytoplasmic-facing; sequence NEDTVTQAGMSLGSGGAAPADD.

The protein belongs to the archaeal/bacterial/fungal opsin family.

The protein localises to the cell membrane. In terms of biological role, light-driven chloride pump. This is Cruxhalorhodopsin-3 (choP3) from Haloarcula vallismortis (Halobacterium vallismortis).